We begin with the raw amino-acid sequence, 206 residues long: Type III pantothenate kinase (206 aa).

5-12 (DIGNTFLH) contributes to the ATP binding site. Residues Tyr69 and 73–76 (GVDR) each bind substrate. The active-site Proton acceptor is the Asp75. Asp90 is a binding site for K(+). Residue Ser93 coordinates ATP. Thr145 provides a ligand contact to substrate.

It belongs to the type III pantothenate kinase family. As to quaternary structure, homodimer. The cofactor is NH4(+). K(+) is required as a cofactor.

The protein resides in the cytoplasm. It catalyses the reaction (R)-pantothenate + ATP = (R)-4'-phosphopantothenate + ADP + H(+). The protein operates within cofactor biosynthesis; coenzyme A biosynthesis; CoA from (R)-pantothenate: step 1/5. In terms of biological role, catalyzes the phosphorylation of pantothenate (Pan), the first step in CoA biosynthesis. The protein is Type III pantothenate kinase of Helicobacter hepaticus (strain ATCC 51449 / 3B1).